The following is a 558-amino-acid chain: Arginine--tRNA ligase (558 aa).

Positions 119–129 (ANPNGPLHVGH) match the 'HIGH' region motif.

It belongs to the class-I aminoacyl-tRNA synthetase family.

It localises to the cytoplasm. It carries out the reaction tRNA(Arg) + L-arginine + ATP = L-arginyl-tRNA(Arg) + AMP + diphosphate. This Methanoregula boonei (strain DSM 21154 / JCM 14090 / 6A8) protein is Arginine--tRNA ligase.